A 194-amino-acid polypeptide reads, in one-letter code: NADPH-flavin oxidoreductase (194 aa).

Belongs to the non-flavoprotein flavin reductase family. In terms of assembly, homodimer. It can form an isobutylamine N-hydroxylase two component enzyme system formed of a flavin reductase component (VlmR) and a monooxygenase component (VlmH).

The catalysed reaction is FADH2 + NADP(+) = FAD + NADPH + 2 H(+). The enzyme catalyses FMNH2 + NADP(+) = FMN + NADPH + 2 H(+). Functionally, involved in the biosynthesis of the azoxy antibiotic valanimycin, which has an antitumor activity. Catalyzes the reduction of FAD/FMN to FADH(2)/FMNH(2) which are subsequently used for the hydroxylation of isobutylamine by the isobutylamine N-hydroxylase VlmH. It can reduce either FAD or flavin mononucleotide (FMN) but prefers FAD. The enzyme has a strong preference for NADPH as acceptor. This chain is NADPH-flavin oxidoreductase, found in Streptomyces viridifaciens.